Consider the following 361-residue polypeptide: 3-dehydroquinate synthase (361 aa).

NAD(+)-binding positions include glycine 104–aspartate 108, threonine 128–threonine 129, lysine 141, lysine 150, and phenylalanine 168–threonine 171. Positions 183, 246, and 263 each coordinate Zn(2+).

It belongs to the sugar phosphate cyclases superfamily. Dehydroquinate synthase family. Co(2+) is required as a cofactor. It depends on Zn(2+) as a cofactor. NAD(+) serves as cofactor.

The protein resides in the cytoplasm. The catalysed reaction is 7-phospho-2-dehydro-3-deoxy-D-arabino-heptonate = 3-dehydroquinate + phosphate. It functions in the pathway metabolic intermediate biosynthesis; chorismate biosynthesis; chorismate from D-erythrose 4-phosphate and phosphoenolpyruvate: step 2/7. In terms of biological role, catalyzes the conversion of 3-deoxy-D-arabino-heptulosonate 7-phosphate (DAHP) to dehydroquinate (DHQ). The sequence is that of 3-dehydroquinate synthase from Opitutus terrae (strain DSM 11246 / JCM 15787 / PB90-1).